The chain runs to 358 residues: tRNA-specific 2-thiouridylase MnmA (358 aa).

ATP is bound by residues 8–15 (GLSGGVDS) and M34. Residues 94 to 96 (NPD) form an interaction with target base in tRNA region. The active-site Nucleophile is C99. A disulfide bridge links C99 with C196. Residue G123 participates in ATP binding. An interaction with tRNA region spans residues 146–148 (KDQ). Catalysis depends on C196, which acts as the Cysteine persulfide intermediate. The segment at 308-309 (RY) is interaction with tRNA.

The protein belongs to the MnmA/TRMU family.

It is found in the cytoplasm. The enzyme catalyses S-sulfanyl-L-cysteinyl-[protein] + uridine(34) in tRNA + AH2 + ATP = 2-thiouridine(34) in tRNA + L-cysteinyl-[protein] + A + AMP + diphosphate + H(+). Catalyzes the 2-thiolation of uridine at the wobble position (U34) of tRNA, leading to the formation of s(2)U34. The protein is tRNA-specific 2-thiouridylase MnmA of Thiobacillus denitrificans (strain ATCC 25259 / T1).